Reading from the N-terminus, the 81-residue chain is ATP synthase subunit c (81 aa).

The next 2 helical transmembrane spans lie at 5-25 and 57-77; these read IAAG…IGAG and VGLV…FVFA.

It belongs to the ATPase C chain family. As to quaternary structure, F-type ATPases have 2 components, F(1) - the catalytic core - and F(0) - the membrane proton channel. F(1) has five subunits: alpha(3), beta(3), gamma(1), delta(1), epsilon(1). F(0) has three main subunits: a(1), b(2) and c(10-14). The alpha and beta chains form an alternating ring which encloses part of the gamma chain. F(1) is attached to F(0) by a central stalk formed by the gamma and epsilon chains, while a peripheral stalk is formed by the delta and b chains.

The protein localises to the cell membrane. Its function is as follows. F(1)F(0) ATP synthase produces ATP from ADP in the presence of a proton or sodium gradient. F-type ATPases consist of two structural domains, F(1) containing the extramembraneous catalytic core and F(0) containing the membrane proton channel, linked together by a central stalk and a peripheral stalk. During catalysis, ATP synthesis in the catalytic domain of F(1) is coupled via a rotary mechanism of the central stalk subunits to proton translocation. Functionally, key component of the F(0) channel; it plays a direct role in translocation across the membrane. A homomeric c-ring of between 10-14 subunits forms the central stalk rotor element with the F(1) delta and epsilon subunits. This chain is ATP synthase subunit c, found in Mycolicibacterium gilvum (strain PYR-GCK) (Mycobacterium gilvum (strain PYR-GCK)).